The chain runs to 570 residues: Sulfite reductase [NADPH] hemoprotein beta-component (570 aa).

Residues Cys434, Cys440, Cys479, and Cys483 each contribute to the [4Fe-4S] cluster site. Cys483 contributes to the siroheme binding site.

The protein belongs to the nitrite and sulfite reductase 4Fe-4S domain family. Alpha(8)-beta(8). The alpha component is a flavoprotein, the beta component is a hemoprotein. Siroheme is required as a cofactor. It depends on [4Fe-4S] cluster as a cofactor.

It carries out the reaction hydrogen sulfide + 3 NADP(+) + 3 H2O = sulfite + 3 NADPH + 4 H(+). The protein operates within sulfur metabolism; hydrogen sulfide biosynthesis; hydrogen sulfide from sulfite (NADPH route): step 1/1. In terms of biological role, component of the sulfite reductase complex that catalyzes the 6-electron reduction of sulfite to sulfide. This is one of several activities required for the biosynthesis of L-cysteine from sulfate. In Escherichia coli O17:K52:H18 (strain UMN026 / ExPEC), this protein is Sulfite reductase [NADPH] hemoprotein beta-component.